Reading from the N-terminus, the 558-residue chain is 2-isopropylmalate synthase (558 aa).

The Pyruvate carboxyltransferase domain maps to 30-303 (PIWCSVDLRD…DPKLDFSNIP (274 aa)). Asp39, His242, His244, and Asn278 together coordinate Mg(2+). Residues 438-558 (LNNTLCVQDF…GLVSALNRII (121 aa)) are regulatory domain.

It belongs to the alpha-IPM synthase/homocitrate synthase family. LeuA type 2 subfamily. In terms of assembly, homodimer. Mg(2+) is required as a cofactor.

It is found in the cytoplasm. It carries out the reaction 3-methyl-2-oxobutanoate + acetyl-CoA + H2O = (2S)-2-isopropylmalate + CoA + H(+). It functions in the pathway amino-acid biosynthesis; L-leucine biosynthesis; L-leucine from 3-methyl-2-oxobutanoate: step 1/4. In terms of biological role, catalyzes the condensation of the acetyl group of acetyl-CoA with 3-methyl-2-oxobutanoate (2-ketoisovalerate) to form 3-carboxy-3-hydroxy-4-methylpentanoate (2-isopropylmalate). This Helicobacter hepaticus (strain ATCC 51449 / 3B1) protein is 2-isopropylmalate synthase.